We begin with the raw amino-acid sequence, 915 residues long: Metabotropic glutamate receptor 7 (915 aa).

The first 34 residues, 1 to 34 (MVQLGKLLRVLTLMKFPCCVLEVLLCVLAAAARG), serve as a signal peptide directing secretion. The Extracellular portion of the chain corresponds to 35–590 (QEMYAPHSIR…IIKLEWHSPW (556 aa)). A disulfide bond links cysteine 67 and cysteine 109. Asparagine 98 is a glycosylation site (N-linked (GlcNAc...) asparagine). L-glutamate contacts are provided by residues serine 159, 180-182 (AST), tyrosine 230, and aspartate 314. 7 disulfide bridges follow: cysteine 249–cysteine 541, cysteine 374–cysteine 390, cysteine 430–cysteine 437, cysteine 523–cysteine 542, cysteine 527–cysteine 545, cysteine 548–cysteine 560, and cysteine 563–cysteine 576. Lysine 407 is a binding site for L-glutamate. N-linked (GlcNAc...) asparagine glycans are attached at residues asparagine 458 and asparagine 486. N-linked (GlcNAc...) asparagine glycosylation is present at asparagine 572. A helical transmembrane segment spans residues 591-615 (AVIPVFLAMLGIIATIFVMATFIRY). Residues 616–627 (NDTPIVRASGRE) are Cytoplasmic-facing. A helical transmembrane segment spans residues 628–648 (LSYVLLTGIFLCYIITFLMIA). Residues 649 to 654 (KPDVAV) lie on the Extracellular side of the membrane. The chain crosses the membrane as a helical span at residues 655 to 675 (CSFRRVFLGLGMCISYAALLT). Residues 676–702 (KTNRIYRIFEQGKKSVTAPRLISPTSQ) are Cytoplasmic-facing. Residues 703-723 (LAITSSLISVQLLGVFIWFGV) traverse the membrane as a helical segment. The Extracellular segment spans residues 724–753 (DPPNIIIDYDEHKTMNPEQARGVLKCDITD). A helical membrane pass occupies residues 754 to 775 (LQIICSLGYSILLMVTCTVYAI). Over 776 to 788 (KTRGVPENFNEAK) the chain is Cytoplasmic. Residues 789–810 (PIGFTMYTTCIVWLAFIPIFFG) form a helical membrane-spanning segment. The Extracellular portion of the chain corresponds to 811 to 825 (TAQSAEKLYIQTTTL). The chain crosses the membrane as a helical span at residues 826–850 (TISMNLSASVALGMLYMPKVYIIIF). At 851 to 915 (HPELNVQKRK…KYVSYNNLVI (65 aa)) the chain is on the cytoplasmic side. The disordered stretch occupies residues 874 to 895 (SRLSHKPSDRPNGEAKTELCEN). A compositionally biased stretch (basic and acidic residues) spans 879–892 (KPSDRPNGEAKTEL). Serine 900 carries the phosphoserine modification.

It belongs to the G-protein coupled receptor 3 family. As to quaternary structure, homodimer. Interacts with PICK1. In terms of tissue distribution, widely distributed throughout the brain.

The protein localises to the cell membrane. In terms of biological role, G-protein coupled receptor activated by glutamate that regulates axon outgrowth through the MAPK-cAMP-PKA signaling pathway during neuronal development. Ligand binding causes a conformation change that triggers signaling via guanine nucleotide-binding proteins (G proteins) and modulates the activity of downstream effectors, such as adenylate cyclase that it inhibits. The sequence is that of Metabotropic glutamate receptor 7 (Grm7) from Rattus norvegicus (Rat).